A 54-amino-acid chain; its full sequence is MKELIFFLLIIVILFVVFMVVSSKQTKTFGRNEEPFLQIKNNLGWGGCGLTNWF.

The signal sequence occupies residues 1 to 23 (MKELIFFLLIIVILFVVFMVVSS).

This is an uncharacterized protein from Acheta domesticus (House cricket).